The following is a 924-amino-acid chain: Alpha-actinin, sarcomeric (924 aa).

Residues 1–250 (MMMENGLSME…IMTYVSCYYH (250 aa)) are actin-binding. 2 Calponin-homology (CH) domains span residues 34-138 (KQQK…LRFA) and 147-253 (MTAK…HAFQ). Spectrin repeat units lie at residues 251 to 395 (AFQG…TVSD), 396 to 510 (ISNS…RCQR), 511 to 631 (ICDQ…TAND), and 632 to 744 (MTRK…TMET). EF-hand domains follow at residues 778–813 (EQLNEFRSSFNHFDKNRTGRLSPEEFKSCLVSLGYS) and 819–854 (QGDLDFQRILAVVDPNNTGYVHFDAFLDFMTRESTD). Residues Asp-791, Asn-793, Thr-795, Arg-797, and Glu-802 each contribute to the Ca(2+) site.

Belongs to the alpha-actinin family. As to quaternary structure, homodimer; antiparallel. Interacts with Smn; the interaction occurs in adult thoracic tissues. In terms of tissue distribution, larval muscle isoform is expressed in the larval body wall, adult muscles of the head and abdomen and supercontractile muscles of the larva and adult. Adult muscle isoform accumulates within adult fibrillar and tubular muscles.

It is found in the cytoplasm. The protein resides in the myofibril. The protein localises to the sarcomere. It localises to the z line. F-actin cross-linking protein which is thought to anchor actin to a variety of intracellular structures. This is a bundling protein. In Drosophila melanogaster (Fruit fly), this protein is Alpha-actinin, sarcomeric (Actn).